A 155-amino-acid polypeptide reads, in one-letter code: Ribosomal RNA large subunit methyltransferase H (155 aa).

Residues Leu-72, Gly-103, and 122–127 (LSALTL) each bind S-adenosyl-L-methionine.

It belongs to the RNA methyltransferase RlmH family. Homodimer.

The protein localises to the cytoplasm. The enzyme catalyses pseudouridine(1915) in 23S rRNA + S-adenosyl-L-methionine = N(3)-methylpseudouridine(1915) in 23S rRNA + S-adenosyl-L-homocysteine + H(+). Its function is as follows. Specifically methylates the pseudouridine at position 1915 (m3Psi1915) in 23S rRNA. In Escherichia fergusonii (strain ATCC 35469 / DSM 13698 / CCUG 18766 / IAM 14443 / JCM 21226 / LMG 7866 / NBRC 102419 / NCTC 12128 / CDC 0568-73), this protein is Ribosomal RNA large subunit methyltransferase H.